The sequence spans 1263 residues: DNA-directed RNA polymerase subunit beta (1263 aa).

Belongs to the RNA polymerase beta chain family. In terms of assembly, the RNAP catalytic core consists of 2 alpha, 1 beta, 1 beta' and 1 omega subunit. When a sigma factor is associated with the core the holoenzyme is formed, which can initiate transcription.

It carries out the reaction RNA(n) + a ribonucleoside 5'-triphosphate = RNA(n+1) + diphosphate. DNA-dependent RNA polymerase catalyzes the transcription of DNA into RNA using the four ribonucleoside triphosphates as substrates. The protein is DNA-directed RNA polymerase subunit beta of Thermotoga petrophila (strain ATCC BAA-488 / DSM 13995 / JCM 10881 / RKU-1).